The primary structure comprises 251 residues: Putative glutathione-independent glyoxalase hsp3105 (251 aa).

The protein belongs to the peptidase C56 family. HSP31-like subfamily.

Its subcellular location is the cytoplasm. It is found in the nucleus. It carries out the reaction methylglyoxal + H2O = (R)-lactate + H(+). May catalyze the conversion of methylglyoxal (MG) to D-lactate in a single glutathione (GSH)-independent step. May play a role in detoxifying endogenously produced glyoxals. Involved in protection against reactive oxygen species (ROS). The chain is Putative glutathione-independent glyoxalase hsp3105 from Schizosaccharomyces pombe (strain 972 / ATCC 24843) (Fission yeast).